Here is a 366-residue protein sequence, read N- to C-terminus: Phospho-N-acetylmuramoyl-pentapeptide-transferase (366 aa).

The next 10 membrane-spanning stretches (helical) occupy residues 25–45 (AGAAMFTSALIVFLFGPAIIN), 70–90 (GTPTMGGLMILAGILGGSLLW), 93–113 (LSNVYVVAVLMVTLGFGAIGF), 134–154 (LGIEFLIAAIAVFFMMKMALA), 174–194 (FVINLGYFFVLFGAFVIVGAG), 205–225 (GLAIVPVMIAAATFGVIAYLA), 245–265 (LAVIVGAVIGAGLGFLWFNAP), 268–288 (AIFMGDTGSLALGGLIGSIAV), 297–317 (VIVGGLFVMETLSVIIQVFWF), and 343–363 (QVVIRFWIISVGLALLGLATL).

This sequence belongs to the glycosyltransferase 4 family. MraY subfamily. The cofactor is Mg(2+).

The protein localises to the cell inner membrane. It carries out the reaction UDP-N-acetyl-alpha-D-muramoyl-L-alanyl-gamma-D-glutamyl-meso-2,6-diaminopimeloyl-D-alanyl-D-alanine + di-trans,octa-cis-undecaprenyl phosphate = di-trans,octa-cis-undecaprenyl diphospho-N-acetyl-alpha-D-muramoyl-L-alanyl-D-glutamyl-meso-2,6-diaminopimeloyl-D-alanyl-D-alanine + UMP. The protein operates within cell wall biogenesis; peptidoglycan biosynthesis. Functionally, catalyzes the initial step of the lipid cycle reactions in the biosynthesis of the cell wall peptidoglycan: transfers peptidoglycan precursor phospho-MurNAc-pentapeptide from UDP-MurNAc-pentapeptide onto the lipid carrier undecaprenyl phosphate, yielding undecaprenyl-pyrophosphoryl-MurNAc-pentapeptide, known as lipid I. The polypeptide is Phospho-N-acetylmuramoyl-pentapeptide-transferase (Agrobacterium fabrum (strain C58 / ATCC 33970) (Agrobacterium tumefaciens (strain C58))).